A 256-amino-acid polypeptide reads, in one-letter code: Trypsinogen-like protein 3 (256 aa).

The signal sequence occupies residues 1-14; it reads MILLLVLALGLAGA. Residues 15-237 form the Peptidase S1 domain; it reads SPLGEYKECP…YNDWIHQVMA (223 aa). 6 cysteine pairs are disulfide-bonded: C23/C153, C41/C57, C125/C226, C132/C199, C164/C180, and C189/C213.

Belongs to the peptidase S1 family.

The polypeptide is Trypsinogen-like protein 3 (trp3) (Pseudopleuronectes americanus (Winter flounder)).